A 172-amino-acid chain; its full sequence is Cytidylate kinase (172 aa).

G7–T15 contributes to the ATP binding site.

It belongs to the cytidylate kinase family. Type 2 subfamily.

The protein localises to the cytoplasm. The catalysed reaction is CMP + ATP = CDP + ADP. The enzyme catalyses dCMP + ATP = dCDP + ADP. The chain is Cytidylate kinase from Methanothrix thermoacetophila (strain DSM 6194 / JCM 14653 / NBRC 101360 / PT) (Methanosaeta thermophila).